Consider the following 257-residue polypeptide: HTH-type transcriptional activator mta (257 aa).

In terms of domain architecture, HTH merR-type spans 2 to 71 (KYQVKQVAEI…LDEIKEMLDH (70 aa)). Residues 5–24 (VKQVAEISGVSIRTLHHYDN) constitute a DNA-binding region (H-T-H motif). The tract at residues 71-74 (HPNF) is hinge. The essential for dimerization stretch occupies residues 76 to 104 (RKAALQSQKEILMKKKQRMDEMIQTIDRT). Residues 76-107 (RKAALQSQKEILMKKKQRMDEMIQTIDRTLLS) adopt a coiled-coil conformation.

In terms of assembly, homodimer.

Its subcellular location is the cytoplasm. Functionally, global transcriptional regulator that activates transcription of bmr and blt by binding directly to their promoter. Also stimulates the expression of the mta gene itself, ydfK and ymfE. This is HTH-type transcriptional activator mta (mta) from Bacillus subtilis (strain 168).